The primary structure comprises 140 residues: MLINYLMLLFAAMIIRSFADSGNAIETTLPEITNATTDIPAIRLCGPEGDGYCLHGDCIHARDIDGMYCRCSHGYTGIRCQHVVLVDYQRSEKPNTTTSYIPSPGIMLVLVGIIIITCCLLSVYRFTRRTKLPLQDMVVP.

Residues 1–18 form the signal peptide; the sequence is MLINYLMLLFAAMIIRSF. Topologically, residues 19–100 are extracellular; the sequence is ADSGNAIETT…SEKPNTTTSY (82 aa). The N-linked (GlcNAc...) asparagine; by host glycan is linked to asparagine 34. In terms of domain architecture, EGF-like spans 41–81; it reads AIRLCGPEGDGYCLHGDCIHARDIDGMYCRCSHGYTGIRCQ. 3 disulfide bridges follow: cysteine 45-cysteine 58, cysteine 53-cysteine 69, and cysteine 71-cysteine 80. N-linked (GlcNAc...) asparagine; by host glycosylation is present at asparagine 95. Residues 101 to 121 form a helical membrane-spanning segment; the sequence is IPSPGIMLVLVGIIIITCCLL. Residues 122-140 are Cytoplasmic-facing; sequence SVYRFTRRTKLPLQDMVVP.

It belongs to the orthopoxvirus OPG019 family. Vaccinia growth factor interacts with host EGFR and promotes EGFR dimerization.

It is found in the host membrane. Its subcellular location is the secreted. Stimulates cellular proliferation (hyperplasia)and mobility around infected cells to promote rapid and efficient spread of infection. This effect is beneficial for virus replication in vivo, because poxviruses replicate possibly better in proliferating cells than in quiescent cells. Acts by binding host EGFR, inducing its dimerization, autophosphorylation and leading to activation of several cellular pathways regulating cell proliferation or cell survival. The activation by host EGFR of mitogen activated protein kinases (MAPK) and extracellular-signal regulated kinases (ERK) are essential for the positive effect of vaccinia growth factor on poxvirus virulence in vivo. The chain is Pro-vaccinia growth factor (OPG019) from Homo sapiens (Human).